The sequence spans 459 residues: MNRLPSSASALACSAHALNLIEKRTLNHEEMKALNREVIDYFKEHVNPGFLEYRKSVTAGGDYGAVEWQAGSLNTLVDTQGQEFIDCLGGFGIFNVGHRNPVVVSAVQNQLAKQPLHSQELLDPLRAMLAKTLAALTPGKLKYSFFCNSGTESVEAALKLAKAYQSPRGKFTFIATSGAFHGKSLGALSATAKSIFRRPFMPLLPGFRHVPFGNIDAMSMAFSEGKKTGDEIAAVILEPIQGEGGVILPPQGYLTEVRKLCDEFGALMILDEVQTGMGRTGKMFACEHENVQPDILCLAKALGGGVMPIGATIATEEVFSVLFDNPFLHTTTFGGNPLACAAALATINVLLEQNLPAQAEQKGDTLLDGFRQLAREYPNLVHDARGKGMLMAIEFVDNETGYRFASEMFRQRVLVAGTLNNAKTIRIEPPLTLTIELCEQVLKSARNALAAMQVSVEEV.

Pyridoxal 5'-phosphate is bound by residues 150 to 151 and Q274; that span reads GT. K300 carries the N6-(pyridoxal phosphate)lysine modification. T332 contacts pyridoxal 5'-phosphate.

It belongs to the class-III pyridoxal-phosphate-dependent aminotransferase family. Putrescine aminotransferase subfamily. Requires pyridoxal 5'-phosphate as cofactor.

It catalyses the reaction an alkane-alpha,omega-diamine + 2-oxoglutarate = an omega-aminoaldehyde + L-glutamate. The catalysed reaction is putrescine + 2-oxoglutarate = 1-pyrroline + L-glutamate + H2O. It carries out the reaction cadaverine + 2-oxoglutarate = 5-aminopentanal + L-glutamate. Its pathway is amine and polyamine degradation; putrescine degradation; 4-aminobutanal from putrescine (transaminase route): step 1/1. Functionally, catalyzes the aminotransferase reaction from putrescine to 2-oxoglutarate, leading to glutamate and 4-aminobutanal, which spontaneously cyclizes to form 1-pyrroline. This is the first step in one of two pathways for putrescine degradation, where putrescine is converted into 4-aminobutanoate (gamma-aminobutyrate or GABA) via 4-aminobutanal. Also functions as a cadaverine transaminase in a a L-lysine degradation pathway to succinate that proceeds via cadaverine, glutarate and L-2-hydroxyglutarate. This Salmonella choleraesuis (strain SC-B67) protein is Putrescine aminotransferase.